A 98-amino-acid polypeptide reads, in one-letter code: HssA/B-like protein 39 (98 aa).

The segment at 1–21 (MTLFSSISSMSTSMSGSKSSI) is disordered.

It belongs to the hssA/B family.

The chain is HssA/B-like protein 39 (hssl39) from Dictyostelium discoideum (Social amoeba).